A 101-amino-acid polypeptide reads, in one-letter code: Small ribosomal subunit protein uS14 (101 aa).

The interval 1–22 is disordered; the sequence is MAKVSSIKKNESRKKKSQSLHN. Residues 11–22 are compositionally biased toward basic residues; it reads ESRKKKSQSLHN.

Belongs to the universal ribosomal protein uS14 family. In terms of assembly, part of the 30S ribosomal subunit. Contacts proteins S3 and S10.

Its function is as follows. Binds 16S rRNA, required for the assembly of 30S particles and may also be responsible for determining the conformation of the 16S rRNA at the A site. This is Small ribosomal subunit protein uS14 from Rickettsia conorii (strain ATCC VR-613 / Malish 7).